The chain runs to 103 residues: Small ribosomal subunit protein uS14c (103 aa).

The protein belongs to the universal ribosomal protein uS14 family. Part of the 30S ribosomal subunit.

It is found in the plastid. The protein localises to the chloroplast. Its function is as follows. Binds 16S rRNA, required for the assembly of 30S particles. This Oryza nivara (Indian wild rice) protein is Small ribosomal subunit protein uS14c.